The following is an 881-amino-acid chain: Ribonucleoside-diphosphate reductase large subunit (881 aa).

One can recognise an ATP-cone domain in the interval 69 to 160; that stretch reads TIYLDHNGSI…MTNLHDNTSD (92 aa). Substrate-binding positions include T271, 286 to 287, G315, 493 to 497, and 675 to 679; these read SC, NLCCE, and PTAST. C287 and C510 are joined by a disulfide. N493 functions as the Proton acceptor in the catalytic mechanism. Catalysis depends on C495, which acts as the Cysteine radical intermediate. The active-site Proton acceptor is E497.

This sequence belongs to the ribonucleoside diphosphate reductase large chain family. In terms of assembly, heterotetramer composed of a homodimer of the large subunit (R1) and a homodimer of the small subunit (R2). Larger multisubunit protein complex are also active, composed of (R1)n(R2)n.

The enzyme catalyses a 2'-deoxyribonucleoside 5'-diphosphate + [thioredoxin]-disulfide + H2O = a ribonucleoside 5'-diphosphate + [thioredoxin]-dithiol. Under complex allosteric control mediated by deoxynucleoside triphosphates and ATP binding. The type of nucleotide bound at the specificity site determines substrate preference. It seems probable that ATP makes the enzyme reduce CDP and UDP, dGTP favors ADP reduction and dTTP favors GDP reduction. Ribonucleoside-diphosphate reductase holoenzyme provides the precursors necessary for viral DNA synthesis. Allows virus growth in non-dividing cells. Catalyzes the biosynthesis of deoxyribonucleotides from the corresponding ribonucleotides. The protein is Ribonucleoside-diphosphate reductase large subunit (RNR1) of Acanthamoeba polyphaga mimivirus (APMV).